Reading from the N-terminus, the 353-residue chain is Photosystem II protein D1 (353 aa).

Residue Thr2 is modified to N-acetylthreonine. Position 2 is a phosphothreonine (Thr2). Transmembrane regions (helical) follow at residues 29–46, 118–133, and 142–156; these read YIGW…TATS, HFLL…EWEL, and WIAV…AAAA. Chlorophyll a is bound at residue His118. Position 126 (Tyr126) interacts with pheophytin a. Positions 170 and 189 each coordinate [CaMn4O5] cluster. The chain crosses the membrane as a helical span at residues 197–218; that stretch reads FHMLGVAGVFGGSLFSAMHGSL. Residue His198 coordinates chlorophyll a. A quinone contacts are provided by residues His215 and 264–265; that span reads SF. Fe cation is bound at residue His215. Residue His272 participates in Fe cation binding. Residues 274 to 288 traverse the membrane as a helical segment; sequence FLAAWPVVGIWFTAL. The [CaMn4O5] cluster site is built by His332, Glu333, Asp342, and Ala344. Residues 345 to 353 constitute a propeptide that is removed on maturation; sequence SVDAPSING.

It belongs to the reaction center PufL/M/PsbA/D family. In terms of assembly, PSII is composed of 1 copy each of membrane proteins PsbA, PsbB, PsbC, PsbD, PsbE, PsbF, PsbH, PsbI, PsbJ, PsbK, PsbL, PsbM, PsbT, PsbX, PsbY, PsbZ, Psb30/Ycf12, at least 3 peripheral proteins of the oxygen-evolving complex and a large number of cofactors. It forms dimeric complexes. The cofactor is The D1/D2 heterodimer binds P680, chlorophylls that are the primary electron donor of PSII, and subsequent electron acceptors. It shares a non-heme iron and each subunit binds pheophytin, quinone, additional chlorophylls, carotenoids and lipids. D1 provides most of the ligands for the Mn4-Ca-O5 cluster of the oxygen-evolving complex (OEC). There is also a Cl(-1) ion associated with D1 and D2, which is required for oxygen evolution. The PSII complex binds additional chlorophylls, carotenoids and specific lipids.. In terms of processing, tyr-161 forms a radical intermediate that is referred to as redox-active TyrZ, YZ or Y-Z. C-terminally processed by CTPA; processing is essential to allow assembly of the oxygen-evolving complex and thus photosynthetic growth.

The protein localises to the plastid. It localises to the chloroplast thylakoid membrane. The catalysed reaction is 2 a plastoquinone + 4 hnu + 2 H2O = 2 a plastoquinol + O2. Functionally, photosystem II (PSII) is a light-driven water:plastoquinone oxidoreductase that uses light energy to abstract electrons from H(2)O, generating O(2) and a proton gradient subsequently used for ATP formation. It consists of a core antenna complex that captures photons, and an electron transfer chain that converts photonic excitation into a charge separation. The D1/D2 (PsbA/PsbD) reaction center heterodimer binds P680, the primary electron donor of PSII as well as several subsequent electron acceptors. This chain is Photosystem II protein D1, found in Adiantum capillus-veneris (Maidenhair fern).